The following is a 507-amino-acid chain: Ribose import ATP-binding protein RbsA (507 aa).

2 consecutive ABC transporter domains span residues 7 to 242 (LEMR…VGRP) and 253 to 497 (IPLG…TGVT). 39–46 (GENGAGKS) lines the ATP pocket.

The protein belongs to the ABC transporter superfamily. Ribose importer (TC 3.A.1.2.1) family. The complex is composed of an ATP-binding protein (RbsA), two transmembrane proteins (RbsC) and a solute-binding protein (RbsB).

It is found in the cell inner membrane. It carries out the reaction D-ribose(out) + ATP + H2O = D-ribose(in) + ADP + phosphate + H(+). Its function is as follows. Part of the ABC transporter complex RbsABC involved in ribose import. Responsible for energy coupling to the transport system. This chain is Ribose import ATP-binding protein RbsA, found in Yersinia pestis bv. Antiqua (strain Antiqua).